A 430-amino-acid chain; its full sequence is Histidinol dehydrogenase (430 aa).

3 residues coordinate NAD(+): tyrosine 130, glutamine 191, and asparagine 214. Substrate contacts are provided by serine 237, glutamine 259, and histidine 262. 2 residues coordinate Zn(2+): glutamine 259 and histidine 262. Active-site proton acceptor residues include glutamate 327 and histidine 328. Substrate is bound by residues histidine 328, aspartate 361, glutamate 415, and histidine 420. Zn(2+) is bound at residue aspartate 361. Residue histidine 420 coordinates Zn(2+).

The protein belongs to the histidinol dehydrogenase family. Requires Zn(2+) as cofactor.

It carries out the reaction L-histidinol + 2 NAD(+) + H2O = L-histidine + 2 NADH + 3 H(+). Its pathway is amino-acid biosynthesis; L-histidine biosynthesis; L-histidine from 5-phospho-alpha-D-ribose 1-diphosphate: step 9/9. Catalyzes the sequential NAD-dependent oxidations of L-histidinol to L-histidinaldehyde and then to L-histidine. The sequence is that of Histidinol dehydrogenase from Brucella suis biovar 1 (strain 1330).